The chain runs to 731 residues: Unconventional prefoldin RPB5 interactor-like protein (731 aa).

Coiled-coil stretches lie at residues 91–115 and 143–176; these read RLKLAEEQLKKLAVENDLWQKKLHT and LAEHRKRMRQQKQKERLEREAEPVKKDNEVLRKL. The segment covering 205 to 217 has biased composition (polar residues); it reads PLKSTNESSPKSL. Disordered stretches follow at residues 205–224, 259–302, and 370–396; these read PLKSTNESSPKSLTQEEEDE, MSGE…EEEV, and ASEEEEEVVENNHLPDEPSKELSTVSE. Residues 220–258 adopt a coiled-coil conformation; that stretch reads EEEDELWKKLEAEEQNEADELSSEAEESLKTTDNLVRQL. A compositionally biased stretch (acidic residues) spans 285–300; that stretch reads ISEDDGDDDDEGDQEE. 2 coiled-coil regions span residues 357–379 and 452–477; these read DDLQDLVFEQELEASEEEEEVVE and SIKTKRQTTQDILQKVERNIEFVKEN. Composition is skewed to polar residues over residues 508-518 and 575-599; these read GAIPSPSSDQS and SQFSKPNSSEICFTHSGSITPTSND. Disordered regions lie at residues 508 to 527, 567 to 682, and 694 to 731; these read GAIPSPSSDQSDGIPGKPSD, GSAY…DLRD, and VEKEPTAPEPLPPGKFIDSHAPKKRVSRFKEQRALNKT. The span at 611–621 shows a compositional bias: basic and acidic residues; it reads FYEKYEKDRAK. Over residues 623–644 the composition is skewed to polar residues; sequence SKSNSSEGDATDPESATKSILR. A compositionally biased stretch (basic residues) spans 661–673; sequence KKGRKVRNQKKKE. Basic and acidic residues predominate over residues 721-731; the sequence is RFKEQRALNKT.

Belongs to the RNA polymerase II subunit 5-mediating protein family. In terms of assembly, interacts with serine/threonine-protein phosphatases flw/PP1beta9C and Pp1-87B with higher affinity for Pp1-87B.

The protein resides in the cytoplasm. It is found in the chromosome. It localises to the nucleus. Functionally, inhibits the activity of serine/threonine-protein phosphatases flw/PP1beta9C and Pp1-87B. Required for germ line cell viability and differentiation, normal transcriptional activity and maintenance of DNA integrity. The sequence is that of Unconventional prefoldin RPB5 interactor-like protein from Drosophila melanogaster (Fruit fly).